A 143-amino-acid chain; its full sequence is Large ribosomal subunit protein uL11 (143 aa).

The protein belongs to the universal ribosomal protein uL11 family. Part of the ribosomal stalk of the 50S ribosomal subunit. Interacts with L10 and the large rRNA to form the base of the stalk. L10 forms an elongated spine to which L12 dimers bind in a sequential fashion forming a multimeric L10(L12)X complex. One or more lysine residues are methylated.

In terms of biological role, forms part of the ribosomal stalk which helps the ribosome interact with GTP-bound translation factors. This chain is Large ribosomal subunit protein uL11, found in Stutzerimonas stutzeri (strain A1501) (Pseudomonas stutzeri).